The following is a 376-amino-acid chain: PqqA peptide cyclase (376 aa).

Residues 7-222 (VGLPLWLLAE…TNEYRDKLKA (216 aa)) enclose the Radical SAM core domain. Residues Cys21, Cys25, and Cys28 each contribute to the [4Fe-4S] cluster site.

Belongs to the radical SAM superfamily. PqqE family. Interacts with PqqD. The interaction is necessary for activity of PqqE. It depends on [4Fe-4S] cluster as a cofactor.

The enzyme catalyses [PQQ precursor protein] + S-adenosyl-L-methionine = E-Y cross-linked-[PQQ precursor protein] + 5'-deoxyadenosine + L-methionine + H(+). Its pathway is cofactor biosynthesis; pyrroloquinoline quinone biosynthesis. Functionally, catalyzes the cross-linking of a glutamate residue and a tyrosine residue in the PqqA protein as part of the biosynthesis of pyrroloquinoline quinone (PQQ). In Pseudomonas putida (strain ATCC 700007 / DSM 6899 / JCM 31910 / BCRC 17059 / LMG 24140 / F1), this protein is PqqA peptide cyclase.